The sequence spans 430 residues: ATP-dependent RNA helicase RhlB (430 aa).

Residues 9–37 carry the Q motif motif; the sequence is QKFSDFALHPQVIEALESKGFHYCTPIQA. Positions 40–219 constitute a Helicase ATP-binding domain; sequence LPLTLSGRDV…FEQMNNAEYV (180 aa). 53 to 60 provides a ligand contact to ATP; the sequence is AQTGTGKT. The short motif at 165–168 is the DEAD box element; that stretch reads DEAD. Positions 245–390 constitute a Helicase C-terminal domain; the sequence is RLLQTLLEEE…LSKYNSDALM (146 aa). The disordered stretch occupies residues 392 to 430; it reads DLPAPKRLTRPPRSNNGPRRHNSAPRRSGAPRNNRKRAD.

This sequence belongs to the DEAD box helicase family. RhlB subfamily. As to quaternary structure, component of the RNA degradosome, which is a multiprotein complex involved in RNA processing and mRNA degradation.

The protein resides in the cytoplasm. It catalyses the reaction ATP + H2O = ADP + phosphate + H(+). DEAD-box RNA helicase involved in RNA degradation. Has RNA-dependent ATPase activity and unwinds double-stranded RNA. The protein is ATP-dependent RNA helicase RhlB of Pectobacterium atrosepticum (strain SCRI 1043 / ATCC BAA-672) (Erwinia carotovora subsp. atroseptica).